The primary structure comprises 259 residues: Proteasome subunit alpha (259 aa).

Belongs to the peptidase T1A family. As to quaternary structure, the 20S proteasome core is composed of 14 alpha and 14 beta subunits that assemble into four stacked heptameric rings, resulting in a barrel-shaped structure. The two inner rings, each composed of seven catalytic beta subunits, are sandwiched by two outer rings, each composed of seven alpha subunits. The catalytic chamber with the active sites is on the inside of the barrel. Has a gated structure, the ends of the cylinder being occluded by the N-termini of the alpha-subunits. Is capped at one or both ends by the proteasome regulatory ATPase, PAN.

It localises to the cytoplasm. Its activity is regulated as follows. The formation of the proteasomal ATPase PAN-20S proteasome complex, via the docking of the C-termini of PAN into the intersubunit pockets in the alpha-rings, triggers opening of the gate for substrate entry. Interconversion between the open-gate and close-gate conformations leads to a dynamic regulation of the 20S proteasome proteolysis activity. Functionally, component of the proteasome core, a large protease complex with broad specificity involved in protein degradation. The sequence is that of Proteasome subunit alpha from Methanococcus maripaludis (strain C7 / ATCC BAA-1331).